The chain runs to 377 residues: Carbamoyl phosphate synthase small chain (377 aa).

The CPSase stretch occupies residues 1 to 186 (MSTPALLVLA…LGKGFVTPDE (186 aa)). The L-glutamine site is built by Ser47, Gly238, and Gly240. In terms of domain architecture, Glutamine amidotransferase type-1 spans 190–377 (HVVAYDFGVK…IGNMKAAKRA (188 aa)). Cys266 serves as the catalytic Nucleophile. The L-glutamine site is built by Leu267, Gln270, Asn308, Gly310, and Phe311. Residues His350 and Glu352 contribute to the active site.

It belongs to the CarA family. In terms of assembly, composed of two chains; the small (or glutamine) chain promotes the hydrolysis of glutamine to ammonia, which is used by the large (or ammonia) chain to synthesize carbamoyl phosphate. Tetramer of heterodimers (alpha,beta)4.

The catalysed reaction is hydrogencarbonate + L-glutamine + 2 ATP + H2O = carbamoyl phosphate + L-glutamate + 2 ADP + phosphate + 2 H(+). It carries out the reaction L-glutamine + H2O = L-glutamate + NH4(+). It functions in the pathway amino-acid biosynthesis; L-arginine biosynthesis; carbamoyl phosphate from bicarbonate: step 1/1. The protein operates within pyrimidine metabolism; UMP biosynthesis via de novo pathway; (S)-dihydroorotate from bicarbonate: step 1/3. In terms of biological role, small subunit of the glutamine-dependent carbamoyl phosphate synthetase (CPSase). CPSase catalyzes the formation of carbamoyl phosphate from the ammonia moiety of glutamine, carbonate, and phosphate donated by ATP, constituting the first step of 2 biosynthetic pathways, one leading to arginine and/or urea and the other to pyrimidine nucleotides. The small subunit (glutamine amidotransferase) binds and cleaves glutamine to supply the large subunit with the substrate ammonia. In Neisseria meningitidis serogroup A / serotype 4A (strain DSM 15465 / Z2491), this protein is Carbamoyl phosphate synthase small chain.